Reading from the N-terminus, the 712-residue chain is Aryl hydrocarbon receptor nuclear translocator 2 (712 aa).

Residues alanine 36–arginine 73 form a disordered region. Arginine 42 carries the post-translational modification Omega-N-methylarginine. The segment covering phenylalanine 63–arginine 73 has biased composition (basic and acidic residues). The 54-residue stretch at phenylalanine 63 to methionine 116 folds into the bHLH domain. PAS domains lie at threonine 134–arginine 209 and proline 323–lysine 393. Residues serine 398 to leucine 441 form the PAC domain. The interval alanine 573 to glutamate 712 is disordered. 2 stretches are compositionally biased toward low complexity: residues serine 597–serine 626 and serine 653–glutamine 675.

Efficient DNA binding requires dimerization with another bHLH protein. Heterodimer with NPAS4 or SIM1. Heterodimer with the aryl hydrocarbon receptor (AHR) or the SIM1 protein. Interacts with TACC3. As to expression, restricted to adult brain and kidney.

It is found in the nucleus. Its function is as follows. Transcription factor that plays a role in the development of the hypothalamo-pituitary axis, postnatal brain growth, and visual and renal function. Specifically recognizes the xenobiotic response element (XRE). The polypeptide is Aryl hydrocarbon receptor nuclear translocator 2 (Arnt2) (Mus musculus (Mouse)).